Reading from the N-terminus, the 433-residue chain is 28S rRNA (cytosine-C(5))-methyltransferase (433 aa).

S-adenosyl-L-methionine contacts are provided by residues 235–241 (CAAPGMK), Glu259, Asp286, and Asp304. Cys357 serves as the catalytic Nucleophile.

It belongs to the class I-like SAM-binding methyltransferase superfamily. RsmB/NOP family.

It catalyses the reaction a cytidine in 28S rRNA + S-adenosyl-L-methionine = a 5-methylcytidine in 28S rRNA + S-adenosyl-L-homocysteine + H(+). Functionally, S-adenosyl-L-methionine-dependent methyltransferase that specifically methylates the C(5) position of a cytosine in 28S rRNA. The protein is 28S rRNA (cytosine-C(5))-methyltransferase of Drosophila melanogaster (Fruit fly).